The chain runs to 151 residues: MLP-like protein 329 (151 aa).

Belongs to the MLP family.

In Arabidopsis thaliana (Mouse-ear cress), this protein is MLP-like protein 329 (MLP329).